Consider the following 347-residue polypeptide: uncharacterized protein (347 aa).

A signal peptide spans 1–21; it reads MRYRIFLLFFFALLPTSLVWA.

This is an uncharacterized protein from Escherichia coli (strain K12).